The chain runs to 253 residues: Coenzyme F420:L-glutamate ligase (253 aa).

Residues 9–12, 38–39, and lysine 43 contribute to the GTP site; these read LPEI and ST. Aspartate 113 is an a divalent metal cation binding site. Position 116 (asparagine 116) interacts with GTP. The a divalent metal cation site is built by aspartate 148, threonine 149, and glutamate 206. 204 to 211 lines the GTP pocket; that stretch reads AGEGDDGT.

This sequence belongs to the CofE family. As to quaternary structure, homodimer. It depends on Mg(2+) as a cofactor. Requires Mn(2+) as cofactor. The cofactor is K(+).

The enzyme catalyses oxidized coenzyme F420-0 + GTP + L-glutamate = oxidized coenzyme F420-1 + GDP + phosphate + H(+). The catalysed reaction is oxidized coenzyme F420-1 + GTP + L-glutamate = oxidized coenzyme F420-2 + GDP + phosphate + H(+). Its pathway is cofactor biosynthesis; coenzyme F420 biosynthesis. In terms of biological role, catalyzes the GTP-dependent successive addition of two or more gamma-linked L-glutamates to the L-lactyl phosphodiester of 7,8-didemethyl-8-hydroxy-5-deazariboflavin (F420-0) to form coenzyme F420-0-glutamyl-glutamate (F420-2) or polyglutamated F420 derivatives. In Natronomonas pharaonis (strain ATCC 35678 / DSM 2160 / CIP 103997 / JCM 8858 / NBRC 14720 / NCIMB 2260 / Gabara) (Halobacterium pharaonis), this protein is Coenzyme F420:L-glutamate ligase.